Reading from the N-terminus, the 444-residue chain is Acyl-CoA 6-desaturase (444 aa).

At 1–131 (MGKGGNQGEG…DMNLFKTNHV (131 aa)) the chain is on the cytoplasmic side. In terms of domain architecture, Cytochrome b5 heme-binding spans 18–95 (VPTFSWEEIQ…LKPLLIGELA (78 aa)). The helical transmembrane segment at 132 to 152 (FFLLLLAHIIALESIAWFTVF) threads the bilayer. Residues 153-157 (YFGNG) are Lumenal-facing. Residues 158–178 (WIPTLITAFVLATSQAQAGWL) form a helical membrane-spanning segment. Over 179–264 (QHDYGHLSVY…KYLPYNHQHE (86 aa)) the chain is Cytoplasmic. Residues 180–184 (HDYGH) carry the Histidine box-1 motif. The Histidine box-2 motif lies at 217 to 221 (HFQHH). The chain crosses the membrane as a helical span at residues 265–285 (YFFLIGPPLLIPMYFQYQIIM). At 286–305 (TMIVHKNWVDLAWAVSYYIR) the chain is on the lumenal side. The helical transmembrane segment at 306-326 (FFITYIPFYGILGALLFLNFI) threads the bilayer. Residues 327–444 (RFLESHWFVW…KLWLDAYLHK (118 aa)) are Cytoplasmic-facing. Positions 382 to 386 (QIEHH) match the Histidine box-3 motif.

The protein belongs to the fatty acid desaturase type 1 family. As to expression, expressed in a wide array of tissues, highest expression is found in liver followed by brain, lung, heart, and retina. A lower level is found in breast tumor when compared with normal tissues; lowest levels were found in patients with poor prognostic index.

The protein localises to the endoplasmic reticulum membrane. The enzyme catalyses (9Z,12Z)-octadecadienoyl-CoA + 2 Fe(II)-[cytochrome b5] + O2 + 2 H(+) = (6Z,9Z,12Z)-octadecatrienoyl-CoA + 2 Fe(III)-[cytochrome b5] + 2 H2O. The catalysed reaction is (9Z,12Z,15Z)-octadecatrienoyl-CoA + 2 Fe(II)-[cytochrome b5] + O2 + 2 H(+) = (6Z,9Z,12Z,15Z)-octadecatetraenoyl-CoA + 2 Fe(III)-[cytochrome b5] + 2 H2O. It carries out the reaction hexadecanoyl-CoA + 2 Fe(II)-[cytochrome b5] + O2 + 2 H(+) = (6Z)-hexadecenoyl-CoA + 2 Fe(III)-[cytochrome b5] + 2 H2O. It catalyses the reaction (9Z,12Z,15Z,18Z,21Z)-tetracosapentaenoyl-CoA + 2 Fe(II)-[cytochrome b5] + O2 + 2 H(+) = (6Z,9Z,12Z,15Z,18Z,21Z)-tetracosahexaenoyl-CoA + 2 Fe(III)-[cytochrome b5] + 2 H2O. The enzyme catalyses (11E)-octadecenoyl-CoA + 2 Fe(II)-[cytochrome b5] + O2 + 2 H(+) = (6Z,11E)-octadecadienoyl-CoA + 2 Fe(III)-[cytochrome b5] + 2 H2O. The catalysed reaction is (11Z,14Z)-eicosadienoyl-CoA + 2 Fe(II)-[cytochrome b5] + O2 + 2 H(+) = (8Z,11Z,14Z)-eicosatrienoyl-CoA + 2 Fe(III)-[cytochrome b5] + 2 H2O. It carries out the reaction (11Z,14Z,17Z)-eicosatrienoyl-CoA + 2 Fe(II)-[cytochrome b5] + O2 + 2 H(+) = (8Z,11Z,14Z,17Z)-eicosatetraenoyl-CoA + 2 Fe(III)-[cytochrome b5] + 2 H2O. The protein operates within lipid metabolism; polyunsaturated fatty acid biosynthesis. In terms of biological role, involved in the biosynthesis of highly unsaturated fatty acids (HUFA) from the essential polyunsaturated fatty acids (PUFA) linoleic acid (LA) (18:2n-6) and alpha-linolenic acid (ALA) (18:3n-3) precursors, acting as a fatty acyl-coenzyme A (CoA) desaturase that introduces a cis double bond at carbon 6 of the fatty acyl chain. Catalyzes the first and rate limiting step in this pathway which is the desaturation of LA (18:2n-6) and ALA (18:3n-3) into gamma-linoleate (GLA) (18:3n-6) and stearidonate (18:4n-3), respectively. Subsequently, in the biosynthetic pathway of HUFA n-3 series, it desaturates tetracosapentaenoate (24:5n-3) to tetracosahexaenoate (24:6n-3), which is then converted to docosahexaenoate (DHA)(22:6n-3), an important lipid for nervous system function. Desaturates hexadecanate (palmitate) to produce 6Z-hexadecenoate (sapienate), a fatty acid unique to humans and major component of human sebum, that has been implicated in the development of acne and may have potent antibacterial activity. It can also desaturate (11E)-octadecenoate (trans-vaccenoate, the predominant trans fatty acid in human milk) at carbon 6 generating (6Z,11E)-octadecadienoate. In addition to Delta-6 activity, this enzyme exhibits Delta-8 activity with slight biases toward n-3 fatty acyl-CoA substrates. This chain is Acyl-CoA 6-desaturase, found in Homo sapiens (Human).